We begin with the raw amino-acid sequence, 301 residues long: Ribosomal RNA small subunit methyltransferase H (301 aa).

S-adenosyl-L-methionine contacts are provided by residues 33 to 35 (GGH), aspartate 52, phenylalanine 79, aspartate 100, and glutamine 107.

This sequence belongs to the methyltransferase superfamily. RsmH family.

It localises to the cytoplasm. The catalysed reaction is cytidine(1402) in 16S rRNA + S-adenosyl-L-methionine = N(4)-methylcytidine(1402) in 16S rRNA + S-adenosyl-L-homocysteine + H(+). Functionally, specifically methylates the N4 position of cytidine in position 1402 (C1402) of 16S rRNA. In Mycoplasmopsis synoviae (strain 53) (Mycoplasma synoviae), this protein is Ribosomal RNA small subunit methyltransferase H.